The sequence spans 343 residues: 4-hydroxy-3-methylbut-2-enyl diphosphate reductase (343 aa).

Cysteine 18 contacts [4Fe-4S] cluster. Residues histidine 47 and histidine 83 each contribute to the (2E)-4-hydroxy-3-methylbut-2-enyl diphosphate site. Dimethylallyl diphosphate is bound by residues histidine 47 and histidine 83. Positions 47 and 83 each coordinate isopentenyl diphosphate. Residue cysteine 105 participates in [4Fe-4S] cluster binding. Residue histidine 133 coordinates (2E)-4-hydroxy-3-methylbut-2-enyl diphosphate. Histidine 133 is a binding site for dimethylallyl diphosphate. Residue histidine 133 participates in isopentenyl diphosphate binding. Glutamate 135 functions as the Proton donor in the catalytic mechanism. Threonine 174 is a (2E)-4-hydroxy-3-methylbut-2-enyl diphosphate binding site. [4Fe-4S] cluster is bound at residue cysteine 204. Serine 232, serine 233, asparagine 234, and serine 277 together coordinate (2E)-4-hydroxy-3-methylbut-2-enyl diphosphate. Residues serine 232, serine 233, asparagine 234, and serine 277 each coordinate dimethylallyl diphosphate. The isopentenyl diphosphate site is built by serine 232, serine 233, asparagine 234, and serine 277.

This sequence belongs to the IspH family. [4Fe-4S] cluster serves as cofactor.

It catalyses the reaction isopentenyl diphosphate + 2 oxidized [2Fe-2S]-[ferredoxin] + H2O = (2E)-4-hydroxy-3-methylbut-2-enyl diphosphate + 2 reduced [2Fe-2S]-[ferredoxin] + 2 H(+). It carries out the reaction dimethylallyl diphosphate + 2 oxidized [2Fe-2S]-[ferredoxin] + H2O = (2E)-4-hydroxy-3-methylbut-2-enyl diphosphate + 2 reduced [2Fe-2S]-[ferredoxin] + 2 H(+). The protein operates within isoprenoid biosynthesis; dimethylallyl diphosphate biosynthesis; dimethylallyl diphosphate from (2E)-4-hydroxy-3-methylbutenyl diphosphate: step 1/1. It participates in isoprenoid biosynthesis; isopentenyl diphosphate biosynthesis via DXP pathway; isopentenyl diphosphate from 1-deoxy-D-xylulose 5-phosphate: step 6/6. Catalyzes the conversion of 1-hydroxy-2-methyl-2-(E)-butenyl 4-diphosphate (HMBPP) into a mixture of isopentenyl diphosphate (IPP) and dimethylallyl diphosphate (DMAPP). Acts in the terminal step of the DOXP/MEP pathway for isoprenoid precursor biosynthesis. In Bartonella henselae (strain ATCC 49882 / DSM 28221 / CCUG 30454 / Houston 1) (Rochalimaea henselae), this protein is 4-hydroxy-3-methylbut-2-enyl diphosphate reductase.